The sequence spans 340 residues: Cyclic GMP-AMP synthase-like receptor 3 (340 aa).

Residues serine 62 and 74–76 contribute to the ATP site; that span reads EAD. Residues glutamate 74, aspartate 76, and aspartate 177 each contribute to the Mg(2+) site. ATP-binding positions include lysine 241 and 255–259; that span reads SYHLK. 2 residues coordinate Mn(2+): aspartate 267 and aspartate 270.

This sequence belongs to the mab-21 family. It depends on Mg(2+) as a cofactor. The cofactor is Mn(2+).

The catalysed reaction is 2 ATP = 3',3'-c-di-AMP + 2 diphosphate. Nucleotidyltransferase that catalyzes the formation of cyclic di-AMP (3',3'-c-di-AMP) from 2 molecules of ATP and plays a key role in innate immunity. Acts as a key sensor of double-stranded RNA (dsRNA), the presence of dsRNA in the cytoplasm being a danger signal that triggers the immune responses. Directly binds dsRNA, activating the nucleotidyltransferase activity, leading to synthesis of 3',3'-c-di-AMP, a second messenger that binds to and activates Sting, thereby triggering the immune response via activation of the NF-kappa-B transcription factor. This Stylophora pistillata (Smooth cauliflower coral) protein is Cyclic GMP-AMP synthase-like receptor 3.